An 89-amino-acid polypeptide reads, in one-letter code: MAHKKAGGSSRNGRDSAGRRLGVKKYGGEAVIPGNIIVRQRGTKFWPAAGVGMGKDHTIFATVDGAVTFHKGLKNRTFISVLPVAEAAE.

Residues Met-1–Leu-21 are disordered.

The protein belongs to the bacterial ribosomal protein bL27 family.

This Roseobacter denitrificans (strain ATCC 33942 / OCh 114) (Erythrobacter sp. (strain OCh 114)) protein is Large ribosomal subunit protein bL27.